The sequence spans 190 residues: dITP/XTP pyrophosphatase (190 aa).

7–12 provides a ligand contact to substrate; it reads SNNKNK. The active-site Proton acceptor is the aspartate 68. Aspartate 68 is a Mg(2+) binding site. Substrate-binding positions include threonine 69, 148-151, lysine 171, and 176-177; these read FGYD and HR.

Belongs to the HAM1 NTPase family. In terms of assembly, homodimer. Mg(2+) is required as a cofactor.

The enzyme catalyses XTP + H2O = XMP + diphosphate + H(+). The catalysed reaction is dITP + H2O = dIMP + diphosphate + H(+). It catalyses the reaction ITP + H2O = IMP + diphosphate + H(+). Functionally, pyrophosphatase that catalyzes the hydrolysis of nucleoside triphosphates to their monophosphate derivatives, with a high preference for the non-canonical purine nucleotides XTP (xanthosine triphosphate), dITP (deoxyinosine triphosphate) and ITP. Seems to function as a house-cleaning enzyme that removes non-canonical purine nucleotides from the nucleotide pool, thus preventing their incorporation into DNA/RNA and avoiding chromosomal lesions. The sequence is that of dITP/XTP pyrophosphatase from Flavobacterium psychrophilum (strain ATCC 49511 / DSM 21280 / CIP 103535 / JIP02/86).